The primary structure comprises 310 residues: Epoxyqueuosine reductase (310 aa).

Catalysis depends on aspartate 133, which acts as the Proton donor. Positions tyrosine 179 to leucine 208 constitute a 4Fe-4S ferredoxin-type domain. Residues cysteine 188, cysteine 191, cysteine 194, cysteine 198, cysteine 214, cysteine 241, cysteine 244, and cysteine 248 each coordinate [4Fe-4S] cluster.

The protein belongs to the QueG family. In terms of assembly, monomer. It depends on cob(II)alamin as a cofactor. [4Fe-4S] cluster serves as cofactor.

The protein localises to the cytoplasm. The catalysed reaction is epoxyqueuosine(34) in tRNA + AH2 = queuosine(34) in tRNA + A + H2O. Its pathway is tRNA modification; tRNA-queuosine biosynthesis. Catalyzes the conversion of epoxyqueuosine (oQ) to queuosine (Q), which is a hypermodified base found in the wobble positions of tRNA(Asp), tRNA(Asn), tRNA(His) and tRNA(Tyr). The chain is Epoxyqueuosine reductase from Cyclobacterium marinum (strain ATCC 25205 / DSM 745 / LMG 13164 / NCIMB 1802) (Flectobacillus marinus).